Reading from the N-terminus, the 181-residue chain is Adenine phosphoribosyltransferase 1 (181 aa).

This sequence belongs to the purine/pyrimidine phosphoribosyltransferase family. In terms of assembly, homodimer.

Its subcellular location is the cytoplasm. The enzyme catalyses AMP + diphosphate = 5-phospho-alpha-D-ribose 1-diphosphate + adenine. The protein operates within purine metabolism; AMP biosynthesis via salvage pathway; AMP from adenine: step 1/1. Catalyzes a salvage reaction resulting in the formation of AMP, that is energically less costly than de novo synthesis. This is Adenine phosphoribosyltransferase 1 (APT1) from Triticum aestivum (Wheat).